Reading from the N-terminus, the 222-residue chain is Ribonuclease T (222 aa).

An Exonuclease domain is found at 20–194; the sequence is VVIDVETAGF…YDTERTAELF (175 aa). Mg(2+) is bound by residues D23, E25, H181, and D186. Residue H181 is the Proton donor/acceptor of the active site.

It belongs to the RNase T family. Homodimer. Mg(2+) is required as a cofactor.

Functionally, trims short 3' overhangs of a variety of RNA species, leaving a one or two nucleotide 3' overhang. Responsible for the end-turnover of tRNA: specifically removes the terminal AMP residue from uncharged tRNA (tRNA-C-C-A). Also appears to be involved in tRNA biosynthesis. The chain is Ribonuclease T from Shewanella sp. (strain MR-4).